The sequence spans 47 residues: Protein PsbN (47 aa).

Residues 7-29 (VAISISCLLISFTGYALYTAFGN) traverse the membrane as a helical segment.

The protein belongs to the PsbN family.

The protein resides in the plastid membrane. Functionally, may play a role in photosystem I and II biogenesis. This is Protein PsbN from Aneura mirabilis (Parasitic liverwort).